Here is a 93-residue protein sequence, read N- to C-terminus: Large ribosomal subunit protein uL23cz/uL23cy (93 aa).

This sequence belongs to the universal ribosomal protein uL23 family. Part of the 50S ribosomal subunit.

The protein localises to the plastid. The protein resides in the chloroplast. Binds to 23S rRNA. In Atropa belladonna (Belladonna), this protein is Large ribosomal subunit protein uL23cz/uL23cy (rpl23-A).